Here is a 382-residue protein sequence, read N- to C-terminus: MEAIAQEIQKLHANTDEAGRGKINHDLSVLLASFDTDWEKILKLAAGPLRLALVKVGVDQGIFHALNERSHTLPELIEKTGVAPYLLERILRGQASFGMIKEEGAKGFAANRFTTLLAGPNTSGAVTYIFDILRPIASAIPGFLSERNNPAITSTHDTVFQRAFNTELGGFEWMTGHPEHYGNLFQFLALRPNCEWVDAFPIEAEIGSFTNDPHVEKVLLVDVGGGTGAQSVAFRKKLPHVKGRVIVQEIAETLIHVGAKAPAGIEFMEYDCFTPQPIRGAKFYYLRYVMHLWQDERCVEALKVIITAMGPESRLIIDEAVIPDRDVPWQAACQSILMTAALAGAERTLTEWHNLLDAAGLKILNIFPYDLNMQSVIIAVPK.

S-adenosyl-L-methionine contacts are provided by Glu-249 and Arg-287. His-291 serves as the catalytic Proton acceptor.

This sequence belongs to the class I-like SAM-binding methyltransferase superfamily. Cation-independent O-methyltransferase family.

The enzyme catalyses 3-desmethyl okaramine B + S-adenosyl-L-methionine = okaramine B + S-adenosyl-L-homocysteine + H(+). Its pathway is alkaloid biosynthesis. Its function is as follows. O-methyltransferase; part of the gene cluster that mediates the biosynthesis of okaramine B, a prenylated indole alkaloid that possesses an unusual octacyclic ring system, including a four-membered azetidine ring and an eight-membered azocine ring, and that exhibits insecticidal activity against silkworm larvae. Within the pathway, okaF catalyzes the last step which is the methylation of 3-desmethyl okaramine B to produce okaramine B. With okaG, OkaF is also able to produce okaramine D from okaramine E. The biosynthesis begins with the NRPS okaA that condenses two tryptophan molecules into cyclo(L-Trp-L-Trp). Prenylation by the prenyltransferase okaC then leads to the formation of cyclo(N8-(alpha,alpha-dimethylallyl)-L-Trp-6a-(alpha,alpha-dime-thylallyl)-L-Trp). This is followed by indole 2,3-epoxidation by the FAD-dependent monooxygenase okaB to facilitate the formation of the hexahydropyrrolo[2,3-b]indole (HPI) moiety of okaramine C. The cytochrome P450 monooxygenase okaD then likely catalyzes formation of the eight-membered ring of okaramine A. The dioxygenase okaE further forms the unusual 2-dimethyl-3-methyl-azetidine ring to yield 12-deshydroxyl okaramine E, as well as the hydroxylation of 12-deshydroxyl okaramine E to produce okaramine E. The cytochrome P450 monoxygenase okaG converts 12-deshydroxyl okaramine E into 3-desmethyl okaramine B which is further methylated by the methyltransferase okaF into okaramine B. In a shunt pathway, okaG and okaF together are also able to convert okaramine E into okaramine D. Okaramine H is produced by nonenzymatic conversion from okaramine A. The sequence is that of O-methyltransferase okaF from Penicillium ochrochloron.